Here is a 94-residue protein sequence, read N- to C-terminus: Integration host factor subunit beta (94 aa).

The protein belongs to the bacterial histone-like protein family. As to quaternary structure, heterodimer of an alpha and a beta chain.

In terms of biological role, this protein is one of the two subunits of integration host factor, a specific DNA-binding protein that functions in genetic recombination as well as in transcriptional and translational control. The chain is Integration host factor subunit beta (ihfB) from Haemophilus influenzae (strain ATCC 51907 / DSM 11121 / KW20 / Rd).